Consider the following 224-residue polypeptide: Vesicle transport through interaction with t-SNAREs homolog 1A (224 aa).

Residues 1 to 199 lie on the Cytoplasmic side of the membrane; that stretch reads MSADFEGYEQ…GMLRRIIQNR (199 aa). Coiled-coil stretches lie at residues 31-92 and 106-185; these read PDEK…KRSR and DAGN…GKSS. The helical; Anchor for type IV membrane protein transmembrane segment at 200–220 threads the bilayer; the sequence is ILLVILGIIVVITILTAITFF. At 221–224 the chain is on the vesicular side; that stretch reads VRGH.

This sequence belongs to the VTI1 family. In terms of assembly, interacts with distinct SNARE complexes that contain either STX5 or STX6. Interacts with NAPA and, to a lesser extent, with NAPG. Identified in a complex containing STX6, STX12, VAMP4 and VTI1A. As to expression, specifically expressed in the neuronal tissues cerebellum, cortex and hippocampus. Isoform 1/VTI1A is expressed in the same neuronal tissues but also in lung, liver, kidney and spleen.

The protein resides in the membrane. It is found in the cytoplasmic vesicle. Its subcellular location is the secretory vesicle. It localises to the synaptic vesicle membrane. The protein localises to the clathrin-coated vesicle membrane. The protein resides in the golgi apparatus membrane. V-SNARE that mediates vesicle transport pathways through interactions with t-SNAREs on the target membrane. These interactions are proposed to mediate aspects of the specificity of vesicle trafficking and to promote fusion of the lipid bilayers. Involved in vesicular transport from the late endosomes to the trans-Golgi network. Along with VAMP7, involved in an non-conventional RAB1-dependent traffic route to the cell surface used by KCNIP1 and KCND2. May be concerned with increased secretion of cytokines associated with cellular senescence. The polypeptide is Vesicle transport through interaction with t-SNAREs homolog 1A (Vti1a) (Rattus norvegicus (Rat)).